The chain runs to 501 residues: Protein YLS7 (501 aa).

The chain crosses the membrane as a helical; Signal-anchor for type II membrane protein span at residues 25–45 (IAFAIGGLTSFVIFASLLLFT). The segment at 69-131 (HSIHDPDRNP…NVSIDEEATQ (63 aa)) is disordered. The segment covering 78-89 (PSPVSSSESPPV) has biased composition (low complexity). Residues 94-113 (SDDKVLPKGSHDSNDVRLGE) are compositionally biased toward basic and acidic residues. The segment covering 114–124 (ETNSGKSSNVS) has biased composition (polar residues). The GDS motif motif lies at 211-213 (GDS). A disordered region spans residues 438 to 467 (RHDGHPGPYRSPDPKKITKRGPDGQPPPQD). Residues 449-459 (PDPKKITKRGP) are compositionally biased toward basic and acidic residues. The short motif at 467–481 (DCLHWCMPGPVDTWN) is the DCXHWCLPGXXDXWN motif element.

Belongs to the PC-esterase family. TBL subfamily. In terms of tissue distribution, expressed in roots, cauline leaves and flowers.

The protein localises to the membrane. Functionally, may act as a bridging protein that binds pectin and other cell wall polysaccharides. Probably involved in maintaining esterification of pectins. May be involved in the specific O-acetylation of cell wall polymers. The sequence is that of Protein YLS7 (YLS7) from Arabidopsis thaliana (Mouse-ear cress).